The sequence spans 283 residues: MKIEGTVVAMVTPFTEDDVVDEAGLRENINYLIENGVDGLLVAGTTGESATITHEEQRRMIDILVDEVNGRVRTVAGAGSNSSREAMGLVEYAEDAGADAALVITPYYNKPQPHGLIEHYTMLEEAADIPLIIYNVPSRTGTDIDVDTVAELAKLDGIIGIKEASPDLDKVSMLRSRLMDLGLDDFTVLSGNDNLTLPMISMGAEGVISVVANVDPARMSRLVNEALSGDFESAMKTHYELYSLMKVLFIESNPVPVKEALNMMGKARGSCEDAPGTPAGCKP.

Position 46 (threonine 46) interacts with pyruvate. The active-site Proton donor/acceptor is the tyrosine 134. The Schiff-base intermediate with substrate role is filled by lysine 162. Isoleucine 208 lines the pyruvate pocket.

The protein belongs to the DapA family. In terms of assembly, homotetramer; dimer of dimers.

It is found in the cytoplasm. It carries out the reaction L-aspartate 4-semialdehyde + pyruvate = (2S,4S)-4-hydroxy-2,3,4,5-tetrahydrodipicolinate + H2O + H(+). Its pathway is amino-acid biosynthesis; L-lysine biosynthesis via DAP pathway; (S)-tetrahydrodipicolinate from L-aspartate: step 3/4. In terms of biological role, catalyzes the condensation of (S)-aspartate-beta-semialdehyde [(S)-ASA] and pyruvate to 4-hydroxy-tetrahydrodipicolinate (HTPA). The chain is 4-hydroxy-tetrahydrodipicolinate synthase from Methanothermobacter thermautotrophicus (strain ATCC 29096 / DSM 1053 / JCM 10044 / NBRC 100330 / Delta H) (Methanobacterium thermoautotrophicum).